The primary structure comprises 214 residues: Redox-sensing transcriptional repressor Rex (214 aa).

A DNA-binding region (H-T-H motif) is located at residues 17–56 (LYYRIFKRFHADQVEKASSKQIADAMGIDSATVRRDFSYF). Position 91–96 (91–96 (GCGNIG)) interacts with NAD(+).

The protein belongs to the transcriptional regulatory Rex family. In terms of assembly, homodimer.

The protein localises to the cytoplasm. Its function is as follows. Modulates transcription in response to changes in cellular NADH/NAD(+) redox state. This Streptococcus pyogenes serotype M4 (strain MGAS10750) protein is Redox-sensing transcriptional repressor Rex.